The following is a 231-amino-acid chain: Ribose-5-phosphate isomerase A (231 aa).

Residues 40 to 43, 93 to 96, and 106 to 109 contribute to the substrate site; these read TGST, DGAD, and KGGG. E115 acts as the Proton acceptor in catalysis. K133 contributes to the substrate binding site.

This sequence belongs to the ribose 5-phosphate isomerase family. In terms of assembly, homodimer.

The catalysed reaction is aldehydo-D-ribose 5-phosphate = D-ribulose 5-phosphate. It participates in carbohydrate degradation; pentose phosphate pathway; D-ribose 5-phosphate from D-ribulose 5-phosphate (non-oxidative stage): step 1/1. In terms of biological role, catalyzes the reversible conversion of ribose-5-phosphate to ribulose 5-phosphate. This Escherichia coli O1:K1 / APEC protein is Ribose-5-phosphate isomerase A.